The following is a 211-amino-acid chain: Probable nicotinate-nucleotide adenylyltransferase (211 aa).

The protein belongs to the NadD family.

The catalysed reaction is nicotinate beta-D-ribonucleotide + ATP + H(+) = deamido-NAD(+) + diphosphate. It functions in the pathway cofactor biosynthesis; NAD(+) biosynthesis; deamido-NAD(+) from nicotinate D-ribonucleotide: step 1/1. Functionally, catalyzes the reversible adenylation of nicotinate mononucleotide (NaMN) to nicotinic acid adenine dinucleotide (NaAD). The protein is Probable nicotinate-nucleotide adenylyltransferase of Shewanella frigidimarina (strain NCIMB 400).